An 865-amino-acid polypeptide reads, in one-letter code: TATA box-binding protein-associated factor RNA polymerase I subunit B (865 aa).

Residues 1 to 33 (MHSAKNEKCNACGGYRFSVNDGFKYCDRCGALF) form an RRN7-type zinc finger. Zn(2+) is bound by residues C9, C12, C26, and C29. The tract at residues 35–99 (NFEELEEEEG…DFLQQQAIKG (65 aa)) is B-reader. Residues 100 to 111 (EELELPHDATPD) are B-linker. The interval 112 to 348 (YLYRLALRLF…SQPERMKQGE (237 aa)) is N-terminal cyclin fold. The interval 233–261 (DEDGDQDAQGGQQLDDLTLETTQNPDESI) is disordered. Residues 239 to 248 (DAQGGQQLDD) show a composition bias toward low complexity. A compositionally biased stretch (polar residues) spans 252-261 (ETTQNPDESI). Positions 349 to 496 (VVKPTIVDYA…LLTLRLTFQL (148 aa)) are C-terminal cyclin fold.

The protein belongs to the RRN7/TAF1B family.

The protein localises to the nucleus. The protein resides in the nucleolus. Functionally, component of RNA polymerase I core factor complex that acts as a GTF2B/TFIIB-like factor and plays a key role in multiple steps during transcription initiation such as pre-initiation complex (PIC) assembly and postpolymerase recruitment events in polymerase I (Pol I) transcription. Binds rDNA promoters and plays a role in Pol I recruitment. This chain is TATA box-binding protein-associated factor RNA polymerase I subunit B, found in Caenorhabditis elegans.